The primary structure comprises 563 residues: Chaperonin GroEL 1 (563 aa).

ATP contacts are provided by residues T29–P32, D86–T90, G413, N476–A478, and D492. Residues D520–G545 are disordered. A compositionally biased stretch (gly residues) spans G529 to G545.

This sequence belongs to the chaperonin (HSP60) family. Forms a cylinder of 14 subunits composed of two heptameric rings stacked back-to-back. Interacts with the co-chaperonin GroES.

It is found in the cytoplasm. The enzyme catalyses ATP + H2O + a folded polypeptide = ADP + phosphate + an unfolded polypeptide.. In terms of biological role, together with its co-chaperonin GroES, plays an essential role in assisting protein folding. The GroEL-GroES system forms a nano-cage that allows encapsulation of the non-native substrate proteins and provides a physical environment optimized to promote and accelerate protein folding. The protein is Chaperonin GroEL 1 of Prochlorococcus marinus (strain SARG / CCMP1375 / SS120).